The chain runs to 353 residues: MAIPLVLVLAWLLPVVLAASLTQVNNFGDNPGSLQMYIYVPNKLASKPAIIVAMHPCGGSATEYYGMYDYHSPADQYGYILIYPSATRDYNCFDAYSSASLTHNGGSDSLSIVNMVKYVISTYGADSSKVYMTGSSSGAIMTNVLAGAYPDVFAAGSAFSGMPYACLYGAGAADPIMSNQTCSQGQIQHTGQQWAAYVHNGYPGYTGQYPRLQMWHGTADNVISYADLGQEISQWTTIMGLSFTGNQTNTPLSGYTKMVYGDGSKFQAYSAAGVGHFVPTDVSVVLDWFGITSGTTTTTTPTTTPTTSTSPSSTGGCTAAHWAQCGGIGYSGCTACASPYTCQKANDYYSQCL.

The signal sequence occupies residues 1–18 (MAIPLVLVLAWLLPVVLA). The interval 19–291 (ASLTQVNNFG…VSVVLDWFGI (273 aa)) is catalytic. Serine 136 (charge relay system) is an active-site residue. Asparagine 179 and asparagine 246 each carry an N-linked (GlcNAc...) asparagine glycan. A CBM1 domain is found at 317–353 (CTAAHWAQCGGIGYSGCTACASPYTCQKANDYYSQCL).

The protein belongs to the carbohydrate esterase 1 (CE1) family. Feruloyl esterase type B subfamily. Glycosylated.

It is found in the secreted. It carries out the reaction feruloyl-polysaccharide + H2O = ferulate + polysaccharide.. Its activity is regulated as follows. Inhibited by the specific serine esterase inhibitor AEBSF. Involved in degradation of plant cell walls. Hydrolyzes the feruloyl-arabinose ester bond in arabinoxylans, and the feruloyl-galactose and feruloyl-arabinose ester bonds in pectin. Binds strongly to cellulose. The sequence is that of Feruloyl esterase B (FAEB) from Talaromyces funiculosus (Fruitlet core rot fungus).